Consider the following 177-residue polypeptide: ATP synthase subunit delta (177 aa).

This sequence belongs to the ATPase delta chain family. In terms of assembly, F-type ATPases have 2 components, F(1) - the catalytic core - and F(0) - the membrane proton channel. F(1) has five subunits: alpha(3), beta(3), gamma(1), delta(1), epsilon(1). F(0) has three main subunits: a(1), b(2) and c(10-14). The alpha and beta chains form an alternating ring which encloses part of the gamma chain. F(1) is attached to F(0) by a central stalk formed by the gamma and epsilon chains, while a peripheral stalk is formed by the delta and b chains.

Its subcellular location is the cell membrane. In terms of biological role, f(1)F(0) ATP synthase produces ATP from ADP in the presence of a proton or sodium gradient. F-type ATPases consist of two structural domains, F(1) containing the extramembraneous catalytic core and F(0) containing the membrane proton channel, linked together by a central stalk and a peripheral stalk. During catalysis, ATP synthesis in the catalytic domain of F(1) is coupled via a rotary mechanism of the central stalk subunits to proton translocation. Its function is as follows. This protein is part of the stalk that links CF(0) to CF(1). It either transmits conformational changes from CF(0) to CF(1) or is implicated in proton conduction. The sequence is that of ATP synthase subunit delta from Buchnera aphidicola subsp. Schizaphis graminum (strain Sg).